The chain runs to 371 residues: Queuine tRNA-ribosyltransferase (371 aa).

D90 acts as the Proton acceptor in catalysis. Substrate is bound by residues 90–94 (DSGGF), D144, Q189, and G215. Positions 246 to 252 (GVGTPEN) are RNA binding. The active-site Nucleophile is D265. The RNA binding; important for wobble base 34 recognition stretch occupies residues 270–274 (TRNAR). 4 residues coordinate Zn(2+): C303, C305, C308, and H334.

The protein belongs to the queuine tRNA-ribosyltransferase family. Homodimer. Within each dimer, one monomer is responsible for RNA recognition and catalysis, while the other monomer binds to the replacement base PreQ1. Zn(2+) serves as cofactor.

It carries out the reaction 7-aminomethyl-7-carbaguanine + guanosine(34) in tRNA = 7-aminomethyl-7-carbaguanosine(34) in tRNA + guanine. The protein operates within tRNA modification; tRNA-queuosine biosynthesis. Catalyzes the base-exchange of a guanine (G) residue with the queuine precursor 7-aminomethyl-7-deazaguanine (PreQ1) at position 34 (anticodon wobble position) in tRNAs with GU(N) anticodons (tRNA-Asp, -Asn, -His and -Tyr). Catalysis occurs through a double-displacement mechanism. The nucleophile active site attacks the C1' of nucleotide 34 to detach the guanine base from the RNA, forming a covalent enzyme-RNA intermediate. The proton acceptor active site deprotonates the incoming PreQ1, allowing a nucleophilic attack on the C1' of the ribose to form the product. After dissociation, two additional enzymatic reactions on the tRNA convert PreQ1 to queuine (Q), resulting in the hypermodified nucleoside queuosine (7-(((4,5-cis-dihydroxy-2-cyclopenten-1-yl)amino)methyl)-7-deazaguanosine). In Helicobacter pylori (strain J99 / ATCC 700824) (Campylobacter pylori J99), this protein is Queuine tRNA-ribosyltransferase.